Consider the following 691-residue polypeptide: DNA ligase (691 aa).

Residues 53 to 57, 102 to 103, and glutamate 135 each bind NAD(+); these read DSEYD and SL. Lysine 137 functions as the N6-AMP-lysine intermediate in the catalytic mechanism. The NAD(+) site is built by arginine 158, glutamate 195, lysine 310, and lysine 334. Residues cysteine 428, cysteine 431, cysteine 446, and cysteine 452 each contribute to the Zn(2+) site. The BRCT domain occupies 613 to 691; that stretch reads SEGLPLDGQT…EEEFLVLVGE (79 aa).

It belongs to the NAD-dependent DNA ligase family. LigA subfamily. Mg(2+) serves as cofactor. Mn(2+) is required as a cofactor.

The catalysed reaction is NAD(+) + (deoxyribonucleotide)n-3'-hydroxyl + 5'-phospho-(deoxyribonucleotide)m = (deoxyribonucleotide)n+m + AMP + beta-nicotinamide D-nucleotide.. In terms of biological role, DNA ligase that catalyzes the formation of phosphodiester linkages between 5'-phosphoryl and 3'-hydroxyl groups in double-stranded DNA using NAD as a coenzyme and as the energy source for the reaction. It is essential for DNA replication and repair of damaged DNA. In Psychrobacter cryohalolentis (strain ATCC BAA-1226 / DSM 17306 / VKM B-2378 / K5), this protein is DNA ligase.